The sequence spans 261 residues: Putative outer membrane protein TC_0650 (261 aa).

The signal sequence occupies residues Met1 to Glu17.

The protein resides in the cell outer membrane. This Chlamydia muridarum (strain MoPn / Nigg) protein is Putative outer membrane protein TC_0650.